A 55-amino-acid chain; its full sequence is Large ribosomal subunit protein bL33 (55 aa).

This sequence belongs to the bacterial ribosomal protein bL33 family.

This is Large ribosomal subunit protein bL33 from Xanthomonas oryzae pv. oryzae (strain PXO99A).